The following is a 186-amino-acid chain: Peptidoglycan-recognition protein SD (186 aa).

The N-terminal stretch at 1–18 is a signal peptide; the sequence is MTWIGLLIVGLTAIAVQG. The N-acetylmuramoyl-L-alanine amidase domain maps to 47 to 169; the sequence is AVIAHTAGGA…RQVSATKSPG (123 aa). Residues Cys-57 and Cys-63 are joined by a disulfide bond. The N-linked (GlcNAc...) asparagine glycan is linked to Asn-181.

The protein belongs to the N-acetylmuramoyl-L-alanine amidase 2 family. In terms of tissue distribution, in larvae, it is mainly expressed in fat body. Also expressed in uninduced hemocytes and mbn-2 cells.

Its subcellular location is the secreted. Peptidoglycan-recognition protein that plays a key role in innate immunity by binding to peptidoglycans (PGN) of Gram-positive bacteria and activating the Toll pathway. Has no activity against on Gram-negative bacteria and fungi. Shows some partial redundancy with PRPGP-SA in Gram-positive bacteria recognition. May act by activating the proteolytic cleavage of Spatzle and the subsequent activation of Toll pathway. Recognizes S.aureus PGN. The chain is Peptidoglycan-recognition protein SD (PGRP-SD) from Drosophila melanogaster (Fruit fly).